A 423-amino-acid chain; its full sequence is Transcription factor AP-2-epsilon (423 aa).

The segment at 1–108 is disordered; that stretch reads MLVHSYSSME…EDAGLLSQPH (108 aa). The span at 14-27 shows a compositional bias: low complexity; that stretch reads GLSSSSPGGRLSQL. The short motif at 50 to 55 is the PPxY motif element; it reads YFPPPY. The segment covering 57–70 has biased composition (low complexity); that stretch reads QSSLSYSQSQDGGY. Over residues 79–93 the composition is skewed to polar residues; the sequence is SLNSLHQHQQAAWHS. Residues 276 to 405 are H-S-H (helix-span-helix), dimerization; that stretch reads RRKAANVTLL…YLLEALKLLD (130 aa).

The protein belongs to the AP-2 family. As to quaternary structure, binds DNA as a dimer. Can form homodimers or heterodimers with other AP-2 family members.

It is found in the nucleus. Its function is as follows. Sequence-specific DNA-binding protein that interacts with inducible viral and cellular enhancer elements to regulate transcription of selected genes. AP-2 factors bind to the consensus sequence 5'-GCCNNNGGC-3' and activate genes involved in a large spectrum of important biological functions. The chain is Transcription factor AP-2-epsilon from Danio rerio (Zebrafish).